A 318-amino-acid polypeptide reads, in one-letter code: cAMP/cGMP dual specificity phosphodiesterase MT0825 (318 aa).

Fe cation contacts are provided by Asp21, His23, and Asp63. AMP contacts are provided by residues His23, Asp63, and 97-98 (NH). Mn(2+) is bound by residues Asp63, Asn97, His169, and His207. His209 lines the Fe cation pocket. An AMP-binding site is contributed by His209. Residues 278 to 318 (PGQARRKIAESGIFIEPSRRDSLFKHPPMVLTSSAPRSPVD) form a C-terminal extension region.

It belongs to the cyclic nucleotide phosphodiesterase class-III family. Homodimer. Fe(3+) is required as a cofactor. It depends on Mn(2+) as a cofactor.

Its subcellular location is the cytoplasm. The protein resides in the cell membrane. It is found in the secreted. The protein localises to the cell wall. It localises to the cell envelope. It carries out the reaction a nucleoside 2',3'-cyclic phosphate + H2O = a nucleoside 3'-phosphate + H(+). It catalyses the reaction 2',3'-cyclophospho-AMP + H2O = 3'-AMP + H(+). The enzyme catalyses 2',3'-cyclophospho-GMP + H2O = 3'-GMP + H(+). The catalysed reaction is a nucleoside 3',5'-cyclic phosphate + H2O = a nucleoside 5'-phosphate + H(+). It carries out the reaction 3',5'-cyclic AMP + H2O = AMP + H(+). It catalyses the reaction 3',5'-cyclic GMP + H2O = GMP + H(+). Functionally, cyclic nucleotide phosphodiesterase with a dual-specificity for the second messengers cAMP and cGMP. The chain is cAMP/cGMP dual specificity phosphodiesterase MT0825 from Mycobacterium tuberculosis (strain CDC 1551 / Oshkosh).